Reading from the N-terminus, the 175-residue chain is NADH-ubiquinone oxidoreductase chain 6 (175 aa).

Transmembrane regions (helical) follow at residues 1 to 21 (MMTYIVFILSIIFVMGFVGFS), 25 to 45 (SPIYGGLGLIVSGGVGCGIVL), 47 to 67 (FGGSFLGLMVFLIYLGGMMVV), 88 to 108 (VVLGTFITGLLMEFLMVYYVL), and 149 to 169 (YGTWLVIVTGWSLLIGVVVIM).

The protein belongs to the complex I subunit 6 family. In terms of assembly, core subunit of respiratory chain NADH dehydrogenase (Complex I) which is composed of 45 different subunits.

Its subcellular location is the mitochondrion inner membrane. The catalysed reaction is a ubiquinone + NADH + 5 H(+)(in) = a ubiquinol + NAD(+) + 4 H(+)(out). Functionally, core subunit of the mitochondrial membrane respiratory chain NADH dehydrogenase (Complex I) which catalyzes electron transfer from NADH through the respiratory chain, using ubiquinone as an electron acceptor. Essential for the catalytic activity and assembly of complex I. This Ovis aries (Sheep) protein is NADH-ubiquinone oxidoreductase chain 6 (MT-ND6).